A 446-amino-acid polypeptide reads, in one-letter code: tRNA-2-methylthio-N(6)-dimethylallyladenosine synthase (446 aa).

Residues 2–122 (KKAYVKSYGC…LPDLLRQSRE (121 aa)) enclose the MTTase N-terminal domain. Residues Cys11, Cys47, Cys85, Cys157, Cys161, and Cys164 each coordinate [4Fe-4S] cluster. Positions 143–375 (RNRGVTGFLT…QQLLDQQRHA (233 aa)) constitute a Radical SAM core domain. One can recognise a TRAM domain in the interval 378–440 (AAAVGTVAEI…SNSLFGEVLE (63 aa)).

The protein belongs to the methylthiotransferase family. MiaB subfamily. Monomer. It depends on [4Fe-4S] cluster as a cofactor.

Its subcellular location is the cytoplasm. The catalysed reaction is N(6)-dimethylallyladenosine(37) in tRNA + (sulfur carrier)-SH + AH2 + 2 S-adenosyl-L-methionine = 2-methylsulfanyl-N(6)-dimethylallyladenosine(37) in tRNA + (sulfur carrier)-H + 5'-deoxyadenosine + L-methionine + A + S-adenosyl-L-homocysteine + 2 H(+). Functionally, catalyzes the methylthiolation of N6-(dimethylallyl)adenosine (i(6)A), leading to the formation of 2-methylthio-N6-(dimethylallyl)adenosine (ms(2)i(6)A) at position 37 in tRNAs that read codons beginning with uridine. This is tRNA-2-methylthio-N(6)-dimethylallyladenosine synthase from Methylorubrum populi (strain ATCC BAA-705 / NCIMB 13946 / BJ001) (Methylobacterium populi).